The sequence spans 270 residues: Formamidopyrimidine-DNA glycosylase (270 aa).

The Schiff-base intermediate with DNA role is filled by Pro-2. The Proton donor role is filled by Glu-3. Lys-58 serves as the catalytic Proton donor; for beta-elimination activity. DNA-binding residues include His-91, Arg-110, and Arg-151. An FPG-type zinc finger spans residues 236 to 270 (FVYGRGGQPCKVCGTELREVKLGQRASVYCPRCQR). The active-site Proton donor; for delta-elimination activity is the Arg-260.

It belongs to the FPG family. As to quaternary structure, monomer. It depends on Zn(2+) as a cofactor.

It carries out the reaction Hydrolysis of DNA containing ring-opened 7-methylguanine residues, releasing 2,6-diamino-4-hydroxy-5-(N-methyl)formamidopyrimidine.. It catalyses the reaction 2'-deoxyribonucleotide-(2'-deoxyribose 5'-phosphate)-2'-deoxyribonucleotide-DNA = a 3'-end 2'-deoxyribonucleotide-(2,3-dehydro-2,3-deoxyribose 5'-phosphate)-DNA + a 5'-end 5'-phospho-2'-deoxyribonucleoside-DNA + H(+). Functionally, involved in base excision repair of DNA damaged by oxidation or by mutagenic agents. Acts as a DNA glycosylase that recognizes and removes damaged bases. Has a preference for oxidized purines, such as 7,8-dihydro-8-oxoguanine (8-oxoG). Has AP (apurinic/apyrimidinic) lyase activity and introduces nicks in the DNA strand. Cleaves the DNA backbone by beta-delta elimination to generate a single-strand break at the site of the removed base with both 3'- and 5'-phosphates. The sequence is that of Formamidopyrimidine-DNA glycosylase from Pseudomonas putida (strain ATCC 700007 / DSM 6899 / JCM 31910 / BCRC 17059 / LMG 24140 / F1).